A 428-amino-acid chain; its full sequence is Enolase (428 aa).

Gln-163 provides a ligand contact to (2R)-2-phosphoglycerate. Glu-205 (proton donor) is an active-site residue. Residues Asp-242, Glu-285, and Asp-312 each coordinate Mg(2+). Residues Lys-337, Arg-366, Ser-367, and Lys-388 each coordinate (2R)-2-phosphoglycerate. Lys-337 serves as the catalytic Proton acceptor.

It belongs to the enolase family. The cofactor is Mg(2+).

Its subcellular location is the cytoplasm. It is found in the secreted. The protein resides in the cell surface. It catalyses the reaction (2R)-2-phosphoglycerate = phosphoenolpyruvate + H2O. The protein operates within carbohydrate degradation; glycolysis; pyruvate from D-glyceraldehyde 3-phosphate: step 4/5. Its function is as follows. Catalyzes the reversible conversion of 2-phosphoglycerate (2-PG) into phosphoenolpyruvate (PEP). It is essential for the degradation of carbohydrates via glycolysis. The protein is Enolase of Carboxydothermus hydrogenoformans (strain ATCC BAA-161 / DSM 6008 / Z-2901).